The chain runs to 1180 residues: IQ domain-containing protein N (1180 aa).

The tract at residues 34–78 (HPPAPAHPSLLDKMEKAPPQPQHEGLKSKEHLPQQPAEGKTASRR) is disordered. The region spanning 103 to 132 (HARAATLIQANWRGYWLRQKLISQMMAAKA) is the IQ 1 domain. Disordered stretches follow at residues 283–324 (RVSA…ETPK), 476–496 (MSKTSSQRSPVGVTKPSPQTR), and 786–820 (QRLGGLSAPPWAKPEDRQTQPQPHGHVPGKTTQGG). IQ domains lie at 926 to 955 (RILAVITIQAGVRGYLARRRIRLWHRGAMV), 956 to 978 (IQATWRGYRVRRNLAHLCRATTT), 979 to 1001 (IQSAWRGYSTRRDQARHWQMLHP), 1113 to 1142 (QDKAATAIQSAWRGFKIRQQMRQQQMAAKI), and 1143 to 1165 (VQATWRGHHTRSCLKNTEALLGP).

As to quaternary structure, interacts with calmodulin.

Functionally, essential for spermiogenesis and fertilization. May be required for manchette assembly in elongating spermatids. In Homo sapiens (Human), this protein is IQ domain-containing protein N.